We begin with the raw amino-acid sequence, 379 residues long: RNA-splicing ligase RtcB2 (379 aa).

Mn(2+)-binding residues include Asp74, Cys77, His137, His168, and His239. 136 to 140 (NHFVE) is a binding site for GMP. GMP is bound by residues 239–240 (HN), Ser277, 294–297 (HGAG), and Lys372. The active-site GMP-histidine intermediate is His294.

Belongs to the RtcB family. RtcB2 subfamily. Mn(2+) serves as cofactor.

It catalyses the reaction a 3'-end 3'-phospho-ribonucleotide-RNA + a 5'-end dephospho-ribonucleoside-RNA + GTP = a ribonucleotidyl-ribonucleotide-RNA + GMP + diphosphate. Functionally, GTP-dependent RNA ligase involved in rRNA repair. Repairs damaged 16S rRNA in 30S subunits that has been cleaved between adenine-1493 and guanosine-1494 (E.coli nubering). This specific cleavage is inflicted by CdiA (ECL_04451) or by colicin E3-type (ColE3) proteins. Poorly repairs damaged rRNA in the 70S ribosome; addition of release factor PrfH improves repair about 3-fold in vitro, probably because PrfH hydrolyzes the nascent chain allowing ribosomal subunit dissociation. In vivo the PrfH-RtcB2 pair restores growth in the presence of ribotoxins that specifically create this damage. Does not repair damaged tRNA (tested with tRNA(Asp) and tRNA(Arg)). The protein is RNA-splicing ligase RtcB2 of Escherichia coli (strain ATCC 25922 / DSM 1103 / LMG 8223 / NCIMB 12210 / NCTC 12241 / WDCM 00013 / Seattle 1946).